We begin with the raw amino-acid sequence, 143 residues long: AP-4 complex subunit sigma (143 aa).

This sequence belongs to the adaptor complexes small subunit family. As to quaternary structure, adaptor protein complex 4 (AP-4) is a heterotetramer composed of two large adaptins (epsilon-type subunit and beta-type subunit), a medium adaptin (mu-type subunit) and a small adaptin (sigma-type subunit). Interacts with EHD2.

Its subcellular location is the golgi apparatus. It localises to the trans-Golgi network. It is found in the membrane. The protein localises to the coated pit. Subunit of novel type of clathrin- or non-clathrin-associated protein coat involved in targeting proteins from the trans-Golgi network (TGN) to the endosomal-lysosomal system. This is AP-4 complex subunit sigma from Arabidopsis thaliana (Mouse-ear cress).